Reading from the N-terminus, the 208-residue chain is Uracil phosphoribosyltransferase (208 aa).

5-phospho-alpha-D-ribose 1-diphosphate is bound by residues Arg-78, Arg-103, and Asp-130–Ser-138. Residues Ile-193 and Gly-198–Ala-200 contribute to the uracil site. Asp-199 contributes to the 5-phospho-alpha-D-ribose 1-diphosphate binding site.

The protein belongs to the UPRTase family. It depends on Mg(2+) as a cofactor.

It catalyses the reaction UMP + diphosphate = 5-phospho-alpha-D-ribose 1-diphosphate + uracil. The protein operates within pyrimidine metabolism; UMP biosynthesis via salvage pathway; UMP from uracil: step 1/1. With respect to regulation, allosterically activated by GTP. In terms of biological role, catalyzes the conversion of uracil and 5-phospho-alpha-D-ribose 1-diphosphate (PRPP) to UMP and diphosphate. The polypeptide is Uracil phosphoribosyltransferase (Mannheimia succiniciproducens (strain KCTC 0769BP / MBEL55E)).